The sequence spans 312 residues: Cytoplasmic dynein intermediate light chain DYN3 (312 aa).

This sequence belongs to the dynein light intermediate chain DYN3 family. As to quaternary structure, the dynein complex consists of at least two heavy chains and a number of intermediate and light chains. Interacts with DYN1.

It is found in the cytoplasm. It localises to the cytoskeleton. In terms of biological role, component of the cytoplasmic dynein which acts as a motor for the intracellular retrograde motility of vesicles and organelles along microtubules. May play an important role in the proper orientation of the mitotic spindle into the budding daughter cell yeast. Probably required for normal progression of the cell cycle. The chain is Cytoplasmic dynein intermediate light chain DYN3 (DYN3) from Saccharomyces cerevisiae (strain ATCC 204508 / S288c) (Baker's yeast).